The sequence spans 177 residues: Dihydrofolate reductase (177 aa).

The catalysed reaction is (6S)-5,6,7,8-tetrahydrofolate + NADP(+) = 7,8-dihydrofolate + NADPH + H(+). Its function is as follows. Provides the tetrahydrofolates necessary for the synthesis of nucleotides and amino acids. Bacteriophage T5 induces high levels of dihydrofolate reductase in the host cell, probably for the viral replication. This Escherichia phage T5 (Enterobacteria phage T5) protein is Dihydrofolate reductase.